The following is a 383-amino-acid chain: Acetylornithine deacetylase (383 aa).

His-80 lines the Zn(2+) pocket. Residue Asp-82 is part of the active site. Asp-112 contributes to the Zn(2+) binding site. Residue Glu-144 is part of the active site. Glu-145, Glu-169, and His-355 together coordinate Zn(2+).

It belongs to the peptidase M20A family. ArgE subfamily. In terms of assembly, homodimer. It depends on Zn(2+) as a cofactor. Co(2+) is required as a cofactor. Glutathione serves as cofactor.

It localises to the cytoplasm. The catalysed reaction is N(2)-acetyl-L-ornithine + H2O = L-ornithine + acetate. It participates in amino-acid biosynthesis; L-arginine biosynthesis; L-ornithine from N(2)-acetyl-L-ornithine (linear): step 1/1. In terms of biological role, catalyzes the hydrolysis of the amide bond of N(2)-acetylated L-amino acids. Cleaves the acetyl group from N-acetyl-L-ornithine to form L-ornithine, an intermediate in L-arginine biosynthesis pathway, and a branchpoint in the synthesis of polyamines. This chain is Acetylornithine deacetylase, found in Klebsiella pneumoniae (strain 342).